The sequence spans 101 residues: MKLSTCCAALLLALASPAVLAAPGSCERIQSDISQRIINNGVPESSFTLSIVPNDQVDQPDSQVVGHCANDTHKILYTRTTSGNVSAPAQSSQDGAPAEPQ.

The signal sequence occupies residues 1-21 (MKLSTCCAALLLALASPAVLA). Residues 79–94 (RTTSGNVSAPAQSSQD) are compositionally biased toward polar residues. Residues 79–101 (RTTSGNVSAPAQSSQDGAPAEPQ) are disordered.

This is an uncharacterized protein from Escherichia coli (strain K12).